The following is an 861-amino-acid chain: Extra-large guanine nucleotide-binding protein 2 (861 aa).

Disordered regions lie at residues 1–32 (MAAV…TSSG) and 121–168 (VSGS…DDRV). The segment covering 131 to 143 (KRLDVPEEVKSPA) has biased composition (basic and acidic residues). The span at 146 to 156 (RLSPSSPLSAS) shows a compositional bias: low complexity. Residues 157–168 (AREEDHLDDDRV) show a composition bias toward basic and acidic residues. The short motif at 204 to 211 (RAERKGKR) is the Nuclear localization signal element. The RING-type; degenerate zinc finger occupies 214–257 (CYRCQLGNRFTEKEVCIVCDAKYCFNCVRRAMGAMPEGRKCQAC). The G-alpha domain maps to 461–853 (MLNKLLLIGS…TSMFQEMSTT (393 aa)). The G1 motif stretch occupies residues 464–477 (KLLLIGSEKGGATT). Residue 469 to 477 (GSEKGGATT) participates in GTP binding. Threonine 476 serves as a coordination point for Ca(2+). Residues 523–545 (EMSNDQSSGNVGDETSAKPGNSI) are disordered. A GTP-binding site is contributed by 624 to 632 (DILQAEGLS). Positions 624–632 (DILQAEGLS) are G2 motif. Serine 632 serves as a coordination point for Ca(2+). Residues 665–674 (YQLIRLNPRS) form a G3 motif region. Residues 737 to 744 (LLVLTKFD) are G4 motif. 741 to 744 (TKFD) serves as a coordination point for GTP. The G5 motif stretch occupies residues 818–823 (QVSLES).

Belongs to the G-alpha family. XLG subfamily. As to quaternary structure, interacts with GB1. Component of a G-protein complex at least composed of XLG2 and GB1. Interacts with RTV1. Requires Ca(2+) as cofactor. In terms of tissue distribution, ubiquitous. Strongly expressed in vascular tissues, root and shoot meristems and lateral root primordia.

The protein localises to the nucleus. In terms of biological role, guanine nucleotide-binding proteins (G proteins) are involved as modulators or transducers in various transmembrane signaling systems. Binds GTP with specificity. Plays a role in the root morphogenesis by regulation of the cell proliferation. Acts as a positive regulator in resistance to pathogen that triggers the salicylic acid (SA) pathway. Promotes the DNA binding activity of RTV1 specifically to promoter regions of FT and SOC1 in vivo leading to the activation of floral integrator genes. This is Extra-large guanine nucleotide-binding protein 2 (XLG2) from Arabidopsis thaliana (Mouse-ear cress).